The sequence spans 164 residues: Arginine repressor (164 aa).

This sequence belongs to the ArgR family.

The protein resides in the cytoplasm. The protein operates within amino-acid biosynthesis; L-arginine biosynthesis [regulation]. Its function is as follows. Regulates arginine biosynthesis genes. This Thermus thermophilus (strain ATCC BAA-163 / DSM 7039 / HB27) protein is Arginine repressor.